The primary structure comprises 550 residues: CTP synthase (550 aa).

An amidoligase domain region spans residues 1-270 (MTKFVFVTGG…DRLICEELRL (270 aa)). Position 13 (serine 13) interacts with CTP. Serine 13 is a UTP binding site. ATP contacts are provided by residues 14–19 (SLGKGI) and aspartate 71. Positions 71 and 144 each coordinate Mg(2+). CTP contacts are provided by residues 151–153 (DIE), 191–196 (KTKPTQ), and lysine 227. UTP-binding positions include 191–196 (KTKPTQ) and lysine 227. Residues 295–547 (TIGMVGKYVD…VEAALASQQR (253 aa)) enclose the Glutamine amidotransferase type-1 domain. Glycine 356 is a binding site for L-glutamine. Cysteine 383 functions as the Nucleophile; for glutamine hydrolysis in the catalytic mechanism. L-glutamine contacts are provided by residues 384-387 (LGMQ), glutamate 407, and arginine 473. Catalysis depends on residues histidine 520 and glutamate 522.

It belongs to the CTP synthase family. Homotetramer.

It carries out the reaction UTP + L-glutamine + ATP + H2O = CTP + L-glutamate + ADP + phosphate + 2 H(+). The enzyme catalyses L-glutamine + H2O = L-glutamate + NH4(+). The catalysed reaction is UTP + NH4(+) + ATP = CTP + ADP + phosphate + 2 H(+). It participates in pyrimidine metabolism; CTP biosynthesis via de novo pathway; CTP from UDP: step 2/2. With respect to regulation, allosterically activated by GTP, when glutamine is the substrate; GTP has no effect on the reaction when ammonia is the substrate. The allosteric effector GTP functions by stabilizing the protein conformation that binds the tetrahedral intermediate(s) formed during glutamine hydrolysis. Inhibited by the product CTP, via allosteric rather than competitive inhibition. In terms of biological role, catalyzes the ATP-dependent amination of UTP to CTP with either L-glutamine or ammonia as the source of nitrogen. Regulates intracellular CTP levels through interactions with the four ribonucleotide triphosphates. This chain is CTP synthase, found in Cupriavidus taiwanensis (strain DSM 17343 / BCRC 17206 / CCUG 44338 / CIP 107171 / LMG 19424 / R1) (Ralstonia taiwanensis (strain LMG 19424)).